Reading from the N-terminus, the 149-residue chain is UPF0178 protein CPR_2251 (149 aa).

Belongs to the UPF0178 family.

This is UPF0178 protein CPR_2251 from Clostridium perfringens (strain SM101 / Type A).